The primary structure comprises 159 residues: Outer envelope pore protein 16-3, chloroplastic/mitochondrial (159 aa).

N-acetylmethionine is present on M1. A contains beta strands region spans residues 1 to 65; that stretch reads MDPAEMRYLE…IRTLKMMGTH (65 aa). The next 3 membrane-spanning stretches (helical) occupy residues 24 to 40, 62 to 79, and 92 to 109; these read ITGF…LATW, MGTH…YIGV, and FYNG…VLGY.

It belongs to the Tim17/Tim22/Tim23 family. Plastid outer envelope porin OEP16 (TC 1.B.30) subfamily. Homodimer and oligomers in membrane. Part of both the NADH-ubiquinone oxidoreductase complex I and of the TIM17:23 complex. Interacts with TIM23-2.

It localises to the plastid. It is found in the chloroplast outer membrane. The protein resides in the mitochondrion outer membrane. The protein localises to the mitochondrion inner membrane. Functionally, voltage-dependent high-conductance channel with a slight cation-selectivity; selective for amino acids but excludes triosephosphates or uncharged sugars. Non-essential amino acid-selective channel protein and translocation pore for NADPH:protochlorophyllide oxidoreductase A (PORA) and possibly PORB. The protein is Outer envelope pore protein 16-3, chloroplastic/mitochondrial (OEP163) of Arabidopsis thaliana (Mouse-ear cress).